Here is a 373-residue protein sequence, read N- to C-terminus: Chaperone protein DnaJ (373 aa).

One can recognise a J domain in the interval Asp-5 to Gly-70. The segment at Gly-134–Val-212 adopts a CR-type zinc-finger fold. The Zn(2+) site is built by Cys-147, Cys-150, Cys-164, Cys-167, Cys-186, Cys-189, Cys-200, and Cys-203. CXXCXGXG motif repeat units lie at residues Cys-147–Gly-154, Cys-164–Gly-171, Cys-186–Gly-193, and Cys-200–Gly-207.

The protein belongs to the DnaJ family. As to quaternary structure, homodimer. Requires Zn(2+) as cofactor.

It is found in the cytoplasm. Participates actively in the response to hyperosmotic and heat shock by preventing the aggregation of stress-denatured proteins and by disaggregating proteins, also in an autonomous, DnaK-independent fashion. Unfolded proteins bind initially to DnaJ; upon interaction with the DnaJ-bound protein, DnaK hydrolyzes its bound ATP, resulting in the formation of a stable complex. GrpE releases ADP from DnaK; ATP binding to DnaK triggers the release of the substrate protein, thus completing the reaction cycle. Several rounds of ATP-dependent interactions between DnaJ, DnaK and GrpE are required for fully efficient folding. Also involved, together with DnaK and GrpE, in the DNA replication of plasmids through activation of initiation proteins. This is Chaperone protein DnaJ from Neisseria meningitidis serogroup C (strain 053442).